Here is a 414-residue protein sequence, read N- to C-terminus: 3-phosphoshikimate 1-carboxyvinyltransferase (414 aa).

The 3-phosphoshikimate site is built by Lys20, Ser21, and Arg25. Lys20 contacts phosphoenolpyruvate. Residues Gly88 and Arg116 each contribute to the phosphoenolpyruvate site. The 3-phosphoshikimate site is built by Thr157, Ser158, Gln159, Ser183, Asp297, and Lys324. Gln159 contacts phosphoenolpyruvate. The Proton acceptor role is filled by Asp297. 3 residues coordinate phosphoenolpyruvate: Arg328, Arg369, and Lys395.

This sequence belongs to the EPSP synthase family. As to quaternary structure, monomer.

The protein resides in the cytoplasm. The enzyme catalyses 3-phosphoshikimate + phosphoenolpyruvate = 5-O-(1-carboxyvinyl)-3-phosphoshikimate + phosphate. Its pathway is metabolic intermediate biosynthesis; chorismate biosynthesis. Catalyzes the transfer of the enolpyruvyl moiety of phosphoenolpyruvate (PEP) to the 5-hydroxyl of shikimate-3-phosphate (S3P) to produce enolpyruvyl shikimate-3-phosphate and inorganic phosphate. This chain is 3-phosphoshikimate 1-carboxyvinyltransferase, found in Caldivirga maquilingensis (strain ATCC 700844 / DSM 13496 / JCM 10307 / IC-167).